The chain runs to 228 residues: Max-interacting protein 1 (228 aa).

Disordered regions lie at residues 29–76 (GYAS…NELE) and 161–228 (IGST…SFTS). The span at 43-56 (QHSKPPRRLSRAQK) shows a compositional bias: basic residues. The segment covering 57 to 70 (HSSGSSNTSTANRS) has biased composition (polar residues). The 53-residue stretch at 67 to 119 (ANRSTHNELEKNRRAHLRLCLERLKVLIPLGPDCTRHTTLGLLNKAKAHIKKL) folds into the bHLH domain. The span at 173 to 183 (EREEIEVDVES) shows a compositional bias: acidic residues. Positions 216-228 (GYSSASVKLSFTS) are enriched in polar residues.

In terms of assembly, interacts with SMC3. Efficient DNA binding requires dimerization with another bHLH protein. Binds DNA as a heterodimer with MAX. Interacts with RNF17. As to expression, high levels found in the brain, heart and lung while lower levels are seen in the liver, kidney and skeletal muscle.

It localises to the nucleus. In terms of biological role, transcriptional repressor. MXI1 binds with MAX to form a sequence-specific DNA-binding protein complex which recognizes the core sequence 5'-CAC[GA]TG-3'. MXI1 thus antagonizes MYC transcriptional activity by competing for MAX. The sequence is that of Max-interacting protein 1 (MXI1) from Homo sapiens (Human).